The chain runs to 127 residues: Methylglyoxal synthase (127 aa).

An MGS-like domain is found at 1-127; it reads MEGQRCIALI…ENLIDFNSAD (127 aa). Substrate contacts are provided by residues His-12, Lys-16, 38–41, and 59–60; these read TGTT and SG. Asp-65 (proton donor/acceptor) is an active-site residue. Residue His-92 coordinates substrate.

Belongs to the methylglyoxal synthase family.

The catalysed reaction is dihydroxyacetone phosphate = methylglyoxal + phosphate. In terms of biological role, catalyzes the formation of methylglyoxal from dihydroxyacetone phosphate. The sequence is that of Methylglyoxal synthase from Agrobacterium fabrum (strain C58 / ATCC 33970) (Agrobacterium tumefaciens (strain C58)).